Reading from the N-terminus, the 235-residue chain is Large ribosomal subunit protein uL1 (235 aa).

This sequence belongs to the universal ribosomal protein uL1 family. In terms of assembly, part of the 50S ribosomal subunit.

Functionally, binds directly to 23S rRNA. The L1 stalk is quite mobile in the ribosome, and is involved in E site tRNA release. Protein L1 is also a translational repressor protein, it controls the translation of the L11 operon by binding to its mRNA. This Mycobacterium bovis (strain ATCC BAA-935 / AF2122/97) protein is Large ribosomal subunit protein uL1.